The sequence spans 769 residues: Sensor protein DivL (769 aa).

The helical transmembrane segment at 6–26 (LILAAAAGAVCLAISVALWSH) threads the bilayer. The Histidine kinase domain occupies 547–758 (NVSYELRTPL…TFTCHLPETQ (212 aa)). Tyr550 carries the phosphotyrosine; by autocatalysis modification.

Post-translationally, autophosphorylated.

The protein resides in the cell membrane. The enzyme catalyses ATP + protein L-histidine = ADP + protein N-phospho-L-histidine.. Functionally, required for cell division and growth. It catalyzes the phosphorylation of CtrA and activates transcription in vitro of the cell cycle-regulated fliF promoter. This is Sensor protein DivL (divL) from Caulobacter vibrioides (strain ATCC 19089 / CIP 103742 / CB 15) (Caulobacter crescentus).